We begin with the raw amino-acid sequence, 481 residues long: Molybdate-anion transporter (481 aa).

The next 12 membrane-spanning stretches (helical) occupy residues 1 to 21, 47 to 67, 80 to 100, 131 to 151, 180 to 200, 201 to 221, 276 to 296, 306 to 326, 341 to 361, 371 to 391, 403 to 423, and 443 to 463; these read MFVT…ALEI, LFLK…PYLY, IAIL…VAGW, FMLI…TTTF, WNYG…EWLG, LGPV…AWFV, VMLL…FVFL, PPLG…STLF, LLCL…FSTV, LLAF…VSFL, AVLA…LLAL, and FAGC…LFTV.

The protein belongs to the major facilitator superfamily.

Its subcellular location is the cell membrane. In terms of biological role, mediates high-affinity intracellular uptake of the rare oligo-element molybdenum. This Danio rerio (Zebrafish) protein is Molybdate-anion transporter (mfsd5).